We begin with the raw amino-acid sequence, 234 residues long: Putative gustatory receptor clone PTE38 (234 aa).

A helical transmembrane segment spans residues 1 to 11 (MYLFFSNLSFN). Over 12–42 (DICIITTTIPKMLMNVQSHDQSITYLGCLSQ) the chain is Extracellular. C39 and C121 are disulfide-bonded. A helical transmembrane segment spans residues 43 to 62 (VYLIVNFGSIESCLLAVMAY). Residues 63–84 (DRYVAICHPLKYTVIMNHYFCV) are Cytoplasmic-facing. The helical transmembrane segment at 85-105 (MLLLFACSLALHMCLFHILMV) threads the bilayer. At 106-138 (LILTFCTKTEIPHFFCELAHIIKLTCSDNFINY) the chain is on the extracellular side. Residues 139–160 (LLIYTVSVLFFGVHIVGIILSY) traverse the membrane as a helical segment. Residues 161–182 (IYTVSSVLRMSLLGGMYKAFST) lie on the Cytoplasmic side of the membrane. A helical transmembrane segment spans residues 183-202 (CGSHLSVVSLFYGTGFGVHI). At 203–212 (SSPLTDSPRK) the chain is on the extracellular side. Residues 213–234 (TVVASVMYTVVTQMHGPFIYSL) traverse the membrane as a helical segment.

The protein belongs to the G-protein coupled receptor 1 family. In terms of tissue distribution, tongue specific.

It is found in the cell membrane. Possible taste receptor. This is Putative gustatory receptor clone PTE38 from Rattus norvegicus (Rat).